The primary structure comprises 150 residues: Macrodomain Ter protein (150 aa).

Belongs to the MatP family. In terms of assembly, homodimer.

The protein resides in the cytoplasm. In terms of biological role, required for spatial organization of the terminus region of the chromosome (Ter macrodomain) during the cell cycle. Prevents early segregation of duplicated Ter macrodomains during cell division. Binds specifically to matS, which is a 13 bp signature motif repeated within the Ter macrodomain. This Shigella dysenteriae serotype 1 (strain Sd197) protein is Macrodomain Ter protein.